Here is a 286-residue protein sequence, read N- to C-terminus: MPKLLGSFISFKSPHYLVGSVRDAVSIKAQAFMIFLGAPHTALRVDPNRMQIDEGHTLMEQHNLSKSGMVVHAPYIINCASKDPVKQTFAIDVLTREVKLCHAVGAKLIVLHPGSAVEQTQTQALDHLIKVLNTVIANTKEVIICLETMAGKGNEIGRDLDQLKYVINHIEQQERIGVCLDTCHFHDSGNDFNNTAEIMETIDTKLGFEFLKVIHLNESKNVCGSKKDRHANLGEGMIGFDNLMRFIAQPQIKQIPIVLETPSDKHNYPAVYGAEIERIRAWFGAR.

Positions 72, 112, 147, 181, 184, 215, 228, 230, and 260 each coordinate Zn(2+).

This sequence belongs to the AP endonuclease 2 family. Zn(2+) is required as a cofactor.

It catalyses the reaction Endonucleolytic cleavage to 5'-phosphooligonucleotide end-products.. Its function is as follows. Endonuclease IV plays a role in DNA repair. It cleaves phosphodiester bonds at apurinic or apyrimidinic (AP) sites, generating a 3'-hydroxyl group and a 5'-terminal sugar phosphate. The sequence is that of Probable endonuclease 4 from Mycoplasma pneumoniae (strain ATCC 29342 / M129 / Subtype 1) (Mycoplasmoides pneumoniae).